The chain runs to 957 residues: Valine--tRNA ligase (957 aa).

The 'HIGH' region motif lies at proline 45–histidine 55. Positions lysine 571–serine 575 match the 'KMSKS' region motif. Lysine 574 contributes to the ATP binding site. Residues valine 887–isoleucine 946 adopt a coiled-coil conformation.

The protein belongs to the class-I aminoacyl-tRNA synthetase family. ValS type 1 subfamily. In terms of assembly, monomer.

Its subcellular location is the cytoplasm. It carries out the reaction tRNA(Val) + L-valine + ATP = L-valyl-tRNA(Val) + AMP + diphosphate. Catalyzes the attachment of valine to tRNA(Val). As ValRS can inadvertently accommodate and process structurally similar amino acids such as threonine, to avoid such errors, it has a 'posttransfer' editing activity that hydrolyzes mischarged Thr-tRNA(Val) in a tRNA-dependent manner. In Rhodopseudomonas palustris (strain ATCC BAA-98 / CGA009), this protein is Valine--tRNA ligase.